We begin with the raw amino-acid sequence, 296 residues long: NAD kinase (296 aa).

Asp72 (proton acceptor) is an active-site residue. Residues Asp72 to Gly73, Asn146 to Asp147, Arg157, Lys174, Asp176, Thr187 to Ser192, and Gln247 contribute to the NAD(+) site.

This sequence belongs to the NAD kinase family. Requires a divalent metal cation as cofactor.

The protein resides in the cytoplasm. It carries out the reaction NAD(+) + ATP = ADP + NADP(+) + H(+). Its function is as follows. Involved in the regulation of the intracellular balance of NAD and NADP, and is a key enzyme in the biosynthesis of NADP. Catalyzes specifically the phosphorylation on 2'-hydroxyl of the adenosine moiety of NAD to yield NADP. The chain is NAD kinase from Pseudomonas entomophila (strain L48).